Reading from the N-terminus, the 208-residue chain is Probable splicing factor, arginine/serine-rich 5 (208 aa).

Residues 2-74 (PRLYLGKIPY…MRLVVEMARG (73 aa)) enclose the RRM domain. A disordered region spans residues 71–208 (MARGKPRGND…RSPSPGSPKD (138 aa)). Over residues 84–123 (SRSPRRRSRSPRRRSRTPPRRRSRSRDRKRSRRSRSRSSS) the composition is skewed to basic residues. Over residues 128–153 (PVRESRRRSESRSPSPKRDLKREASR) the composition is skewed to basic and acidic residues.

It belongs to the splicing factor SR family. Post-translationally, extensively phosphorylated on serine residues in the RS domain.

Its subcellular location is the nucleus. Functionally, plays a functionally redundant role in shifting germ cell sexual differentiation in hermaphrodites. The sequence is that of Probable splicing factor, arginine/serine-rich 5 (rsp-5) from Caenorhabditis elegans.